The following is a 61-amino-acid chain: Small ribosomal subunit protein uS14 (61 aa).

Zn(2+)-binding residues include Cys-24, Cys-27, Cys-40, and Cys-43.

It belongs to the universal ribosomal protein uS14 family. Zinc-binding uS14 subfamily. Part of the 30S ribosomal subunit. Contacts proteins S3 and S10. Requires Zn(2+) as cofactor.

Its function is as follows. Binds 16S rRNA, required for the assembly of 30S particles and may also be responsible for determining the conformation of the 16S rRNA at the A site. The polypeptide is Small ribosomal subunit protein uS14 (Sulfurimonas denitrificans (strain ATCC 33889 / DSM 1251) (Thiomicrospira denitrificans (strain ATCC 33889 / DSM 1251))).